A 154-amino-acid polypeptide reads, in one-letter code: Protein LOL1 (154 aa).

Putative zinc finger regions lie at residues 34–64 (QLVC…VTAV), 73–103 (QLVC…VNLA), and 111–141 (HVNC…VTSV).

The protein localises to the nucleus. Its function is as follows. Positive regulator of reactive oxygen-induced cell death. May be involved in the repression of the copper/zinc superoxide dismutase CSD1 and CSD2 that detoxify accumulating superoxide before the reactive oxygen species (ROS) can trigger a cell death cascade. LSD1 and LOL1 have antagonistic effects on CSD1 and CSD2 accumulation to regulate oxidative stress-induced cell death. In Arabidopsis thaliana (Mouse-ear cress), this protein is Protein LOL1 (LOL1).